Here is a 181-residue protein sequence, read N- to C-terminus: NAD(P)H-quinone oxidoreductase subunit 6, chloroplastic (181 aa).

The next 5 membrane-spanning stretches (helical) occupy residues 13 to 33 (PILY…VFFG), 35 to 55 (IIYS…LYLL), 64 to 84 (AQIL…IMLI), 98 to 118 (FGDI…IIMI), and 152 to 172 (LLPF…AITI).

It belongs to the complex I subunit 6 family. In terms of assembly, NDH is composed of at least 16 different subunits, 5 of which are encoded in the nucleus.

It localises to the plastid. It is found in the chloroplast thylakoid membrane. The enzyme catalyses a plastoquinone + NADH + (n+1) H(+)(in) = a plastoquinol + NAD(+) + n H(+)(out). The catalysed reaction is a plastoquinone + NADPH + (n+1) H(+)(in) = a plastoquinol + NADP(+) + n H(+)(out). NDH shuttles electrons from NAD(P)H:plastoquinone, via FMN and iron-sulfur (Fe-S) centers, to quinones in the photosynthetic chain and possibly in a chloroplast respiratory chain. The immediate electron acceptor for the enzyme in this species is believed to be plastoquinone. Couples the redox reaction to proton translocation, and thus conserves the redox energy in a proton gradient. The polypeptide is NAD(P)H-quinone oxidoreductase subunit 6, chloroplastic (ndhG) (Staurastrum punctulatum (Green alga)).